We begin with the raw amino-acid sequence, 22 residues long: GEEERKAMAELEAKKAQEALKA.

The segment at 1-22 is disordered; sequence GEEERKAMAELEAKKAQEALKA. A 4-carboxyglutamate mark is found at glutamate 3, glutamate 4, glutamate 10, and glutamate 18.

Expressed by the venom duct.

It is found in the secreted. Conantokins inhibit N-methyl-D-aspartate (NMDA) receptors. The polypeptide is Conantokin-Oc (Conus ochroleucus (Perfect cone)).